The primary structure comprises 150 residues: Putative pre-16S rRNA nuclease (150 aa).

Belongs to the YqgF nuclease family.

Its subcellular location is the cytoplasm. In terms of biological role, could be a nuclease involved in processing of the 5'-end of pre-16S rRNA. The sequence is that of Putative pre-16S rRNA nuclease from Protochlamydia amoebophila (strain UWE25).